Reading from the N-terminus, the 137-residue chain is Basic phospholipase A2 homolog Ts-R6 (137 aa).

The signal sequence occupies residues 1 to 16 (MRTLWIMAVLLLGVEG). Intrachain disulfides connect Cys-42-Cys-130, Cys-44-Cys-60, Cys-59-Cys-110, Cys-65-Cys-137, Cys-66-Cys-103, Cys-73-Cys-97, and Cys-91-Cys-101.

Expressed by the venom gland.

The protein localises to the secreted. In terms of biological role, snake venom phospholipase A2 homolog that induces local edema a few hours after injection (5-10 ug) in the hind paw and shows weak anticoagulant and myotoxic activities. The protein is Basic phospholipase A2 homolog Ts-R6 of Trimeresurus stejnegeri (Chinese green tree viper).